Reading from the N-terminus, the 253-residue chain is Major prion protein (253 aa).

The signal sequence occupies residues 1–22; the sequence is MANLGCWMLVLFVATWSDLGLC. The segment at 23–38 is interaction with ADGRG6; that stretch reads KKRPKPGGWNTGGSRY. Residues 23–230 are interaction with GRB2, ERI3 and SYN1; the sequence is KKRPKPGGWN…ESQAYYQRGS (208 aa). The disordered stretch occupies residues 26–108; the sequence is PKPGGWNTGG…WNKPSKPKTN (83 aa). Tandem repeats lie at residues 51–59, 60–67, 68–75, 76–83, and 84–91. The segment at 51 to 91 is 5 X 8 AA tandem repeats of P-H-G-G-G-W-G-Q; the sequence is PQGGGGWGQPHGGGWGQPHGGGWGQPHGGGWGQPHGGGWGQ. Over residues 52 to 95 the composition is skewed to gly residues; sequence QGGGGWGQPHGGGWGQPHGGGWGQPHGGGWGQPHGGGWGQGGGT. 12 residues coordinate Cu(2+): H61, G62, G63, H69, G70, G71, H77, G78, G79, H85, G86, and G87. The cysteines at positions 179 and 214 are disulfide-linked. N-linked (GlcNAc...) asparagine glycans are attached at residues N181 and N197. A lipid anchor (GPI-anchor amidated serine) is attached at S230. A propeptide spans 231–253 (removed in mature form); sequence SMVLFSSPPVILLISFLIFLIVG.

It belongs to the prion family. In terms of assembly, monomer and homodimer. Has a tendency to aggregate into amyloid fibrils containing a cross-beta spine, formed by a steric zipper of superposed beta-strands. Soluble oligomers may represent an intermediate stage on the path to fibril formation. Copper binding may promote oligomerization. Interacts with GRB2, APP, ERI3/PRNPIP and SYN1. Mislocalized cytosolically exposed PrP interacts with MGRN1; this interaction alters MGRN1 subcellular location and causes lysosomal enlargement. Interacts with APP. Interacts with KIAA1191. Interacts with ADGRG6.

It is found in the cell membrane. The protein localises to the golgi apparatus. Its function is as follows. Its primary physiological function is unclear. May play a role in neuronal development and synaptic plasticity. May be required for neuronal myelin sheath maintenance. May promote myelin homeostasis through acting as an agonist for ADGRG6 receptor. May play a role in iron uptake and iron homeostasis. Soluble oligomers are toxic to cultured neuroblastoma cells and induce apoptosis (in vitro). Association with GPC1 (via its heparan sulfate chains) targets PRNP to lipid rafts. Also provides Cu(2+) or Zn(2+) for the ascorbate-mediated GPC1 deaminase degradation of its heparan sulfate side chains. The polypeptide is Major prion protein (PRNP) (Gorilla gorilla gorilla (Western lowland gorilla)).